The sequence spans 395 residues: Elongation factor Tu (395 aa).

A tr-type G domain is found at lysine 10 to arginine 205. The tract at residues glycine 19–threonine 26 is G1. Glycine 19 to threonine 26 contacts GTP. Residue threonine 26 participates in Mg(2+) binding. The interval glycine 60–asparagine 64 is G2. The G3 stretch occupies residues aspartate 81–glycine 84. GTP contacts are provided by residues aspartate 81–histidine 85 and asparagine 136–aspartate 139. The interval asparagine 136 to aspartate 139 is G4. The segment at serine 174–leucine 176 is G5.

The protein belongs to the TRAFAC class translation factor GTPase superfamily. Classic translation factor GTPase family. EF-Tu/EF-1A subfamily. Monomer.

Its subcellular location is the cytoplasm. The enzyme catalyses GTP + H2O = GDP + phosphate + H(+). GTP hydrolase that promotes the GTP-dependent binding of aminoacyl-tRNA to the A-site of ribosomes during protein biosynthesis. This Parabacteroides distasonis (strain ATCC 8503 / DSM 20701 / CIP 104284 / JCM 5825 / NCTC 11152) protein is Elongation factor Tu.